The sequence spans 333 residues: Methylosome protein WDR77 (333 aa).

WD repeat units lie at residues 16-59 (CMEV…GAPN), 68-106 (QTEA…SLLV), 113-152 (EHDD…VLKS), 155-195 (AHSS…PATR), 199-240 (CASD…SAQT), 243-283 (VHSQ…VFRD), and 285-328 (SHRD…NLIA).

Heterotetramer; dimer of heterodimer with prmt5. Interacts with histone h2a and h4 and with nucleoplasmin. In terms of tissue distribution, detected in egg (at protein level).

The protein resides in the cytoplasm. It localises to the nucleus. Non-catalytic component of the 20S prmt5-containing methyltransferase complex, which modifies specific arginines to dimethylarginines in several spliceosomal Sm proteins and histones. Required for normal prmt5 methyltransferase activity. The polypeptide is Methylosome protein WDR77 (Xenopus laevis (African clawed frog)).